We begin with the raw amino-acid sequence, 404 residues long: Formate-dependent phosphoribosylglycinamide formyltransferase (404 aa).

Residues 25-26 (EL) and Glu-85 each bind N(1)-(5-phospho-beta-D-ribosyl)glycinamide. ATP is bound by residues Arg-118, Lys-159, 164 to 169 (SSGKGQ), 199 to 202 (EGFI), and Glu-207. In terms of domain architecture, ATP-grasp spans 123 to 318 (RLAAEELGLP…EFELHARAIL (196 aa)). Residues Glu-277 and Glu-289 each coordinate Mg(2+). N(1)-(5-phospho-beta-D-ribosyl)glycinamide-binding positions include Asp-296, Lys-365, and 372-373 (RR).

It belongs to the PurK/PurT family. Homodimer.

It carries out the reaction N(1)-(5-phospho-beta-D-ribosyl)glycinamide + formate + ATP = N(2)-formyl-N(1)-(5-phospho-beta-D-ribosyl)glycinamide + ADP + phosphate + H(+). The protein operates within purine metabolism; IMP biosynthesis via de novo pathway; N(2)-formyl-N(1)-(5-phospho-D-ribosyl)glycinamide from N(1)-(5-phospho-D-ribosyl)glycinamide (formate route): step 1/1. Its function is as follows. Involved in the de novo purine biosynthesis. Catalyzes the transfer of formate to 5-phospho-ribosyl-glycinamide (GAR), producing 5-phospho-ribosyl-N-formylglycinamide (FGAR). Formate is provided by PurU via hydrolysis of 10-formyl-tetrahydrofolate. This Burkholderia mallei (strain NCTC 10247) protein is Formate-dependent phosphoribosylglycinamide formyltransferase.